Consider the following 814-residue polypeptide: Phenylalanine--tRNA ligase beta subunit (814 aa).

Residues 39–153 (SARAKGVVVG…ELPALGAPVA (115 aa)) form the tRNA-binding domain. The 85-residue stretch at 414–498 (ADASSVLLRR…RLVGFDRFGA (85 aa)) folds into the B5 domain. Residues Asp-476, Asp-482, Glu-485, and Glu-486 each contribute to the Mg(2+) site. Residues 720-813 (PTVPASERDL…LVKQHGAELR (94 aa)) form the FDX-ACB domain.

Belongs to the phenylalanyl-tRNA synthetase beta subunit family. Type 1 subfamily. Tetramer of two alpha and two beta subunits. Mg(2+) serves as cofactor.

The protein resides in the cytoplasm. It carries out the reaction tRNA(Phe) + L-phenylalanine + ATP = L-phenylalanyl-tRNA(Phe) + AMP + diphosphate + H(+). This chain is Phenylalanine--tRNA ligase beta subunit, found in Parasynechococcus marenigrum (strain WH8102).